A 398-amino-acid chain; its full sequence is Proteasome-activating nucleotidase (398 aa).

Positions 18–59 (IMYLKKRIRQLELQVRTLEADKERLERELSRLRMEMSRLRQP) form a coiled coil. ATP contacts are provided by residues 183-188 (GCGKTL) and H322. Residues 396-398 (MYG) are docks into pockets in the proteasome alpha-ring to cause gate opening.

The protein belongs to the AAA ATPase family. As to quaternary structure, homohexamer. The hexameric complex has a two-ring architecture resembling a top hat that caps the 20S proteasome core at one or both ends. Upon ATP-binding, the C-terminus of PAN interacts with the alpha-rings of the proteasome core by binding to the intersubunit pockets.

The protein resides in the cytoplasm. Its function is as follows. ATPase which is responsible for recognizing, binding, unfolding and translocation of substrate proteins into the archaeal 20S proteasome core particle. Is essential for opening the gate of the 20S proteasome via an interaction with its C-terminus, thereby allowing substrate entry and access to the site of proteolysis. Thus, the C-termini of the proteasomal ATPase function like a 'key in a lock' to induce gate opening and therefore regulate proteolysis. Unfolding activity requires energy from ATP hydrolysis, whereas ATP binding alone promotes ATPase-20S proteasome association which triggers gate opening, and supports translocation of unfolded substrates. The protein is Proteasome-activating nucleotidase of Thermococcus onnurineus (strain NA1).